Reading from the N-terminus, the 171-residue chain is ATP synthase subunit b (171 aa).

A helical transmembrane segment spans residues 2 to 22 (VLVKMALGFLILLSPLCAMEL).

This sequence belongs to the ATPase B chain family. In terms of assembly, F-type ATPases have 2 components, F(1) - the catalytic core - and F(0) - the membrane proton channel. F(1) has five subunits: alpha(3), beta(3), gamma(1), delta(1), epsilon(1). F(0) has three main subunits: a(1), b(2) and c(10-14). The alpha and beta chains form an alternating ring which encloses part of the gamma chain. F(1) is attached to F(0) by a central stalk formed by the gamma and epsilon chains, while a peripheral stalk is formed by the delta and b chains.

The protein localises to the cell inner membrane. F(1)F(0) ATP synthase produces ATP from ADP in the presence of a proton or sodium gradient. F-type ATPases consist of two structural domains, F(1) containing the extramembraneous catalytic core and F(0) containing the membrane proton channel, linked together by a central stalk and a peripheral stalk. During catalysis, ATP synthesis in the catalytic domain of F(1) is coupled via a rotary mechanism of the central stalk subunits to proton translocation. Its function is as follows. Component of the F(0) channel, it forms part of the peripheral stalk, linking F(1) to F(0). This Helicobacter acinonychis (strain Sheeba) protein is ATP synthase subunit b.